A 66-amino-acid polypeptide reads, in one-letter code: Large ribosomal subunit protein bL35 (66 aa).

Basic residues predominate over residues 1–15 (MPKMKTKSSAKKRFK). Residues 1 to 32 (MPKMKTKSSAKKRFKMTATGKVRAGQAGKRHG) are disordered.

It belongs to the bacterial ribosomal protein bL35 family.

The chain is Large ribosomal subunit protein bL35 from Dinoroseobacter shibae (strain DSM 16493 / NCIMB 14021 / DFL 12).